The chain runs to 235 residues: Large ribosomal subunit protein uL1 (235 aa).

This sequence belongs to the universal ribosomal protein uL1 family. In terms of assembly, part of the 50S ribosomal subunit.

In terms of biological role, binds directly to 23S rRNA. The L1 stalk is quite mobile in the ribosome, and is involved in E site tRNA release. Protein L1 is also a translational repressor protein, it controls the translation of the L11 operon by binding to its mRNA. This chain is Large ribosomal subunit protein uL1, found in Micrococcus luteus (strain ATCC 4698 / DSM 20030 / JCM 1464 / CCM 169 / CCUG 5858 / IAM 1056 / NBRC 3333 / NCIMB 9278 / NCTC 2665 / VKM Ac-2230) (Micrococcus lysodeikticus).